A 1261-amino-acid chain; its full sequence is Mediator of RNA polymerase II transcription subunit 14 (1261 aa).

Residues Met1 to Thr11 are compositionally biased toward basic and acidic residues. Disordered regions lie at residues Met1–His21, Asn413–Glu435, and Asp1193–Thr1220. A compositionally biased stretch (acidic residues) spans Ile417–Asp427. A compositionally biased stretch (basic and acidic residues) spans Gln1205 to Thr1220.

The protein belongs to the Mediator complex subunit 14 family. Component of the Mediator complex.

The protein localises to the nucleus. Its function is as follows. Component of the Mediator complex, a coactivator involved in the regulated transcription of nearly all RNA polymerase II-dependent genes. Mediator functions as a bridge to convey information from gene-specific regulatory proteins to the basal RNA polymerase II transcription machinery. Mediator is recruited to promoters by direct interactions with regulatory proteins and serves as a scaffold for the assembly of a functional preinitiation complex with RNA polymerase II and the general transcription factors. The chain is Mediator of RNA polymerase II transcription subunit 14 (MED14) from Candida albicans (strain SC5314 / ATCC MYA-2876) (Yeast).